The primary structure comprises 432 residues: Glutamate-1-semialdehyde 2,1-aminomutase (432 aa).

Lys272 carries the post-translational modification N6-(pyridoxal phosphate)lysine.

Belongs to the class-III pyridoxal-phosphate-dependent aminotransferase family. HemL subfamily. In terms of assembly, homodimer. Requires pyridoxal 5'-phosphate as cofactor.

The protein localises to the cytoplasm. It catalyses the reaction (S)-4-amino-5-oxopentanoate = 5-aminolevulinate. It participates in porphyrin-containing compound metabolism; protoporphyrin-IX biosynthesis; 5-aminolevulinate from L-glutamyl-tRNA(Glu): step 2/2. It functions in the pathway porphyrin-containing compound metabolism; chlorophyll biosynthesis. This chain is Glutamate-1-semialdehyde 2,1-aminomutase, found in Acaryochloris marina (strain MBIC 11017).